Here is a 282-residue protein sequence, read N- to C-terminus: Undecaprenyl-diphosphatase (282 aa).

A run of 6 helical transmembrane segments spans residues tyrosine 90 to phenylalanine 110, leucine 121 to leucine 141, leucine 165 to glycine 185, phenylalanine 194 to alanine 214, glutamine 228 to leucine 248, and methionine 256 to threonine 276.

This sequence belongs to the UppP family.

The protein localises to the cell membrane. The catalysed reaction is di-trans,octa-cis-undecaprenyl diphosphate + H2O = di-trans,octa-cis-undecaprenyl phosphate + phosphate + H(+). In terms of biological role, catalyzes the dephosphorylation of undecaprenyl diphosphate (UPP). Confers resistance to bacitracin. The polypeptide is Undecaprenyl-diphosphatase (Mycobacterium marinum (strain ATCC BAA-535 / M)).